The sequence spans 106 residues: Large ribosomal subunit protein uL24 (106 aa).

Belongs to the universal ribosomal protein uL24 family. In terms of assembly, part of the 50S ribosomal subunit.

In terms of biological role, one of two assembly initiator proteins, it binds directly to the 5'-end of the 23S rRNA, where it nucleates assembly of the 50S subunit. One of the proteins that surrounds the polypeptide exit tunnel on the outside of the subunit. This Dechloromonas aromatica (strain RCB) protein is Large ribosomal subunit protein uL24.